The following is a 550-amino-acid chain: Chaperonin GroEL (550 aa).

Residues 30 to 33, K51, 87 to 91, G415, 479 to 481, and D495 contribute to the ATP site; these read TLGP, DGTTT, and NAA.

Belongs to the chaperonin (HSP60) family. Forms a cylinder of 14 subunits composed of two heptameric rings stacked back-to-back. Interacts with the co-chaperonin GroES.

It is found in the cytoplasm. The catalysed reaction is ATP + H2O + a folded polypeptide = ADP + phosphate + an unfolded polypeptide.. Functionally, together with its co-chaperonin GroES, plays an essential role in assisting protein folding. The GroEL-GroES system forms a nano-cage that allows encapsulation of the non-native substrate proteins and provides a physical environment optimized to promote and accelerate protein folding. This is Chaperonin GroEL from Polynucleobacter asymbioticus (strain DSM 18221 / CIP 109841 / QLW-P1DMWA-1) (Polynucleobacter necessarius subsp. asymbioticus).